The following is a 483-amino-acid chain: Phosphoglucosamine mutase (483 aa).

Catalysis depends on serine 131, which acts as the Phosphoserine intermediate. Mg(2+)-binding residues include serine 131, aspartate 272, aspartate 274, and aspartate 276. Serine 131 carries the post-translational modification Phosphoserine.

This sequence belongs to the phosphohexose mutase family. Requires Mg(2+) as cofactor. Activated by phosphorylation.

It carries out the reaction alpha-D-glucosamine 1-phosphate = D-glucosamine 6-phosphate. Catalyzes the conversion of glucosamine-6-phosphate to glucosamine-1-phosphate. The sequence is that of Phosphoglucosamine mutase from Magnetococcus marinus (strain ATCC BAA-1437 / JCM 17883 / MC-1).